Reading from the N-terminus, the 744-residue chain is MAADKAADQGAEKHDGAGTSGITDQEKELSSSALQAFLAGNYDACLQHLNTLQDINKDDYKITLNTAVAEFCKSNQTTTDNLRQTLNQLKNQVHSAVEEMDGLDDVENSMLYYNQAVILYHLRQYTEAISVGEKLYQFIEPFEEKFAQAVCFLLVDLYLLTYQAEKALHLLAVLEKMISQGNNNSKNGKNESGNNTNKDSSNQKAESGALIEVAKSKIHQYKVRAYIQMKSLKACKREIKSVMNTAGNSAPSLFLKSNFEYLRGNYRKAVKLLNSANIAEHPGFMKTGECLRCMFWNNLGCIHFAMGKHNLGIFYFKKALQENDNACAQLGTGSSDPGKKFSGRPMCTLLTNKRYELLYNCGIQLLHIGRPLAAFECLIEAVQVYHSNPRLWLRIAECCIAANKGTSEQETKGLPSKKGIVQSIVGQGYHRKIVLASQSIQNVVYNDGQSSAIPVASMEFAAICLRNALLLLPEDQQEPKQENGSKPNNQLGGNTENSESSEACSNKSHEGDKFIAAPPSSPLKKQELENLRCSILACSAYVALALGDNLMALNHADKLLQQPKLSGSLKFLGHLYAAEALISLDRISDAITHLNPENVTDVSLGISSNEQDQGSDKGENEAMESSGKQTPQCYPSSVTSARTMMLFNLGSAYCLRSEYDKARKCLHQAASLIHPKEIPPEAILLAVYLELQNGNTQLALQIIKRNQLLPSVKTLSDMRKKPVFQPVHSLQPIQMPTFTAVQRK.

Residues 1–16 are compositionally biased toward basic and acidic residues; it reads MAADKAADQGAEKHDG. Positions 1–25 are disordered; that stretch reads MAADKAADQGAEKHDGAGTSGITDQ. A coiled-coil region spans residues 72-106; sequence CKSNQTTTDNLRQTLNQLKNQVHSAVEEMDGLDDV. Positions 182 to 198 are enriched in low complexity; sequence NNNSKNGKNESGNNTNK. Disordered regions lie at residues 182–204, 476–520, and 602–634; these read NNNS…SNQK, QQEP…APPS, and VSLG…PQCY. Polar residues-rich tracts occupy residues 484–506 and 602–612; these read GSKP…ACSN and VSLGISSNEQD.

Belongs to the CNOT10 family. In terms of assembly, component of the CCR4-NOT complex. CNOT10 and CNOT11 form a subcomplex docked to the CNOT1 scaffold.

Its subcellular location is the cytoplasm. It localises to the nucleus. In terms of biological role, component of the CCR4-NOT complex which is one of the major cellular mRNA deadenylases and is linked to various cellular processes including bulk mRNA degradation, miRNA-mediated repression, translational repression during translational initiation and general transcription regulation. Additional complex functions may be a consequence of its influence on mRNA expression. Is not required for association of CNOT7 to the CCR4-NOT complex. The polypeptide is CCR4-NOT transcription complex subunit 10 (CNOT10) (Gallus gallus (Chicken)).